The chain runs to 400 residues: Tyrosine-specific transport system 1 (400 aa).

12 consecutive transmembrane segments (helical) span residues 5–25 (VGST…AMPL), 34–54 (FTLV…LLFV), 80–100 (IIAT…YISG), 117–137 (VSVL…THSV), 143–163 (VLFF…LPEI), 176–196 (ALII…GSIP), 211–231 (FSIL…QLST), 250–270 (LNGL…ASAV), 273–293 (FSTL…LECI), 313–333 (LTFI…ILAL), 335–355 (YAGQ…VWKA), and 370–390 (NLTL…PFAI).

The protein belongs to the amino acid/polyamine transporter 2 family. Mtr/TnaB/TyrP permease subfamily.

Its subcellular location is the cell inner membrane. The catalysed reaction is L-tyrosine(in) + H(+)(in) = L-tyrosine(out) + H(+)(out). Functionally, transports tyrosine across the cytoplasmic membrane. The transport system is energized by the proton motive force. This is Tyrosine-specific transport system 1 (tyrP-A) from Haemophilus influenzae (strain ATCC 51907 / DSM 11121 / KW20 / Rd).